We begin with the raw amino-acid sequence, 315 residues long: Prephenate dehydratase (315 aa).

Positions 7 to 190 constitute a Prephenate dehydratase domain; sequence VVAYLGPAGT…ARTRFVAVQA (184 aa). Residues 204 to 283 enclose the ACT domain; it reads SVIFSLPNVP…LVFVGSWPSN (80 aa).

It catalyses the reaction prephenate + H(+) = 3-phenylpyruvate + CO2 + H2O. The protein operates within amino-acid biosynthesis; L-phenylalanine biosynthesis; phenylpyruvate from prephenate: step 1/1. The polypeptide is Prephenate dehydratase (pheA) (Corynebacterium glutamicum (strain ATCC 13032 / DSM 20300 / JCM 1318 / BCRC 11384 / CCUG 27702 / LMG 3730 / NBRC 12168 / NCIMB 10025 / NRRL B-2784 / 534)).